The following is a 135-amino-acid chain: UPF0299 membrane protein Spro_1570 (135 aa).

Transmembrane regions (helical) follow at residues 4-24 (LFTL…CLFA), 30-50 (ALLP…FALL), 63-83 (GCHL…VGVM), and 93-113 (LGPL…VVGY).

Belongs to the UPF0299 family.

It is found in the cell inner membrane. The chain is UPF0299 membrane protein Spro_1570 from Serratia proteamaculans (strain 568).